The sequence spans 72 residues: Potassium channel toxin kappa-KTx 5.1 (72 aa).

The signal sequence occupies residues 1–23 (MKLLPLLFVILIVCAILPDEASC). Positions 24–43 (DQSELERKEENFKDESREIV) are excised as a propeptide. Intrachain disulfides connect C47–C64 and C51–C60. H70 is modified (histidine amide).

It belongs to the short scorpion toxin superfamily. Potassium channel inhibitor kappa-KTx family. Kappa-KTx 5 subfamily. In terms of tissue distribution, expressed by the venom gland.

It localises to the secreted. Its function is as follows. Weak blocker of potassium channels Kv1.1/KCNA1 (IC(50)=578.5 nM-9.9 uM) and Kv1.6/KCNA6 (~60% block at 30 uM of toxin). Acts by binding to the pore and occluding it. Has a voltage-dependent mode of action, which can be explained by a high content of basic residues causing repulsions at higher membrane voltages. Shows a weak interaction with muscle-type nicotinic acetylcholine receptors (nAChR), since it inhibits alpha-bungarotoxin binding to muscle-type nAChR from T.californica (IC(50)=1.4 uM). This suggests it probably weakly inhibits muscle nAChR. The mode of binding to potassium channels of this toxin differs from its homologs (including HefuTx1), since it lacks the key aromatic residue of the functional dyad. In contrast, its functionally important site is composed of a number of basic residues. This is Potassium channel toxin kappa-KTx 5.1 from Heterometrus laoticus (Thai giant scorpion).